Reading from the N-terminus, the 275-residue chain is NADPH-dependent 7-cyano-7-deazaguanine reductase (275 aa).

Residue 81–83 participates in substrate binding; it reads VES. 83–84 provides a ligand contact to NADPH; that stretch reads SK. Cys-182 acts as the Thioimide intermediate in catalysis. The Proton donor role is filled by Asp-189. A substrate-binding site is contributed by 221–222; that stretch reads HE. An NADPH-binding site is contributed by 250–251; the sequence is RG.

It belongs to the GTP cyclohydrolase I family. QueF type 2 subfamily. In terms of assembly, homodimer.

The protein resides in the cytoplasm. The catalysed reaction is 7-aminomethyl-7-carbaguanine + 2 NADP(+) = 7-cyano-7-deazaguanine + 2 NADPH + 3 H(+). It functions in the pathway tRNA modification; tRNA-queuosine biosynthesis. In terms of biological role, catalyzes the NADPH-dependent reduction of 7-cyano-7-deazaguanine (preQ0) to 7-aminomethyl-7-deazaguanine (preQ1). The polypeptide is NADPH-dependent 7-cyano-7-deazaguanine reductase (Polaromonas sp. (strain JS666 / ATCC BAA-500)).